The chain runs to 255 residues: Chlorocatechol 1,2-dioxygenase (255 aa).

Residues tyrosine 130, tyrosine 164, histidine 188, and histidine 190 each contribute to the Fe cation site.

This sequence belongs to the intradiol ring-cleavage dioxygenase family. It depends on Fe(3+) as a cofactor.

The catalysed reaction is 3,5-dichlorocatechol + O2 = (2E,4E)-2,4-dichloromuconate + 2 H(+). The protein operates within aromatic compound metabolism; 3-chlorocatechol degradation. Preferentially converts 3,5-dichlorocatechol as opposed to other chlorinated catechols. Retains diminished activity toward non-chlorinated substrates. This chain is Chlorocatechol 1,2-dioxygenase (tfdC), found in Burkholderia cepacia (Pseudomonas cepacia).